A 160-amino-acid polypeptide reads, in one-letter code: Transcription elongation factor GreA (160 aa).

Residues 8 to 28 adopt a coiled-coil conformation; the sequence is LTEEGLKQLEAELEHLIQVKR.

Belongs to the GreA/GreB family.

Its function is as follows. Necessary for efficient RNA polymerase transcription elongation past template-encoded arresting sites. The arresting sites in DNA have the property of trapping a certain fraction of elongating RNA polymerases that pass through, resulting in locked ternary complexes. Cleavage of the nascent transcript by cleavage factors such as GreA or GreB allows the resumption of elongation from the new 3'terminus. GreA releases sequences of 2 to 3 nucleotides. The protein is Transcription elongation factor GreA of Mycoplasma pneumoniae (strain ATCC 29342 / M129 / Subtype 1) (Mycoplasmoides pneumoniae).